A 348-amino-acid polypeptide reads, in one-letter code: Uroporphyrinogen decarboxylase (348 aa).

Residues 27–31, phenylalanine 46, aspartate 76, tyrosine 152, serine 207, and histidine 320 contribute to the substrate site; that span reads RQAGR.

The protein belongs to the uroporphyrinogen decarboxylase family. Homodimer.

It localises to the cytoplasm. It carries out the reaction uroporphyrinogen III + 4 H(+) = coproporphyrinogen III + 4 CO2. The protein operates within porphyrin-containing compound metabolism; protoporphyrin-IX biosynthesis; coproporphyrinogen-III from 5-aminolevulinate: step 4/4. In terms of biological role, catalyzes the decarboxylation of four acetate groups of uroporphyrinogen-III to yield coproporphyrinogen-III. The polypeptide is Uroporphyrinogen decarboxylase (Bacillus anthracis).